A 373-amino-acid chain; its full sequence is tRNA-specific 2-thiouridylase MnmA (373 aa).

ATP is bound by residues 12 to 19 (GMSGGVDS) and M38. The segment at 98–100 (NPD) is interaction with target base in tRNA. C103 acts as the Nucleophile in catalysis. Residues C103 and C200 are joined by a disulfide bond. G127 provides a ligand contact to ATP. The interaction with tRNA stretch occupies residues 150–152 (KDQ). Catalysis depends on C200, which acts as the Cysteine persulfide intermediate. The interval 312 to 313 (RY) is interaction with tRNA.

This sequence belongs to the MnmA/TRMU family.

Its subcellular location is the cytoplasm. The enzyme catalyses S-sulfanyl-L-cysteinyl-[protein] + uridine(34) in tRNA + AH2 + ATP = 2-thiouridine(34) in tRNA + L-cysteinyl-[protein] + A + AMP + diphosphate + H(+). Functionally, catalyzes the 2-thiolation of uridine at the wobble position (U34) of tRNA, leading to the formation of s(2)U34. This is tRNA-specific 2-thiouridylase MnmA from Streptococcus agalactiae serotype Ia (strain ATCC 27591 / A909 / CDC SS700).